A 397-amino-acid chain; its full sequence is Xyloglucan O-acetyltransferase 3 (397 aa).

The Cytoplasmic segment spans residues 1–3 (MNR). The helical; Signal-anchor for type II membrane protein transmembrane segment at 4–24 (FFYTVGLIFLFSFFILYSPKT) threads the bilayer. At 25-397 (SDLSNNVDLH…RHAFTDFTWS (373 aa)) the chain is on the lumenal side. Cystine bridges form between C48/C98, C69/C134, C78/C370, and C293/C366. N66 carries N-linked (GlcNAc...) asparagine glycosylation. Positions 121–123 (GDS) match the GDS motif motif. S123 acts as the Nucleophile in catalysis. Residues N162, N182, and N294 are each glycosylated (N-linked (GlcNAc...) asparagine). Catalysis depends on D365, which acts as the Proton donor. Residues 365–368 (DCVH) carry the DXXH motif motif. Residue H368 is the Proton acceptor of the active site.

This sequence belongs to the PC-esterase family. TBL subfamily.

The protein localises to the golgi apparatus membrane. In terms of biological role, xyloglucan acetyltransferase that catalyzes the acetylation of fucosylated Gal residues on xyloglucan side chains. Predominantly catalyze 6-O-monoacetylation of Gal residues in the Fuc-Gal-Xyl trisaccharide side chains of xyloglucan oligomers. The protein is Xyloglucan O-acetyltransferase 3 of Populus trichocarpa (Western balsam poplar).